The sequence spans 861 residues: MAEILLTSVINKSVEIAGNLLIQEGKRLYWLKEDIDWLQREMRHIRSYVDNAKAKEAGGDSRVKNLLKDIQELAGDVEDLLDDFLPKIQQSNKFNYCLKRSSFADEFAMEIEKIKRRVVDIDRIRKTYNIIDTDNNNDDCVLLDRRRLFLHADETEIIGLDDDFNMLQAKLLNQDLHYGVVSIVGMPGLGKTTLAKKLYRLIRDQFECSGLVYVSQQPRASEILLDIAKQIGLTEQKMKENLEDNLRSLLKIKRYVFLLDDVWDVEIWDDLKLVLPECDSKVGSRIIITSRNSNVGRYIGGESSLHALQPLESEKSFELFTKKIFNFDDNNSWANASPDLVNIGRNIVGRCGGIPLAIVVTAGMLRARERTEHAWNRVLESMGHKVQDGCAKVLALSYNDLPIASRPCFLYFGLYPEDHEIRAFDLINMWIAEKFIVVNSGNRREAEDLAEDVLNDLVSRNLIQLAKRTYNGRISSCRIHDLLHSLCVDLAKESNFFHTAHDAFGDPGNVARLRRITFYSDNVMIEFFRSNPKLEKLRVLFCFAKDPSIFSHMAYFDFKLLHTLVVVMSQSFQAYVTIPSKFGNMTCLRYLRLEGNICGKLPNSIVKLTRLETIDIDRRSLIQPPSGVWESKHLRHLCYRDYGQACNSCFSISSFYPNIYSLHPNNLQTLMWIPDKFFEPRLLHRLINLRKLGILGVSNSTVKMLSIFSPVLKALEVLKLSFSSDPSEQIKLSSYPHIAKLHLNVNRTMALNSQSFPPNLIKLTLANFTVDRYILAVLKTFPKLRKLKMFICKYNEEKMALSGEANGYSFPQLEVLHIHSPNGLSEVTCTDDVSMPKLKKLLLTGFHCGISLSERLKKLSK.

Positions 63 to 83 (VKNLLKDIQELAGDVEDLLDD) form a coiled coil. The 227-residue stretch at 162 to 388 (DDFNMLQAKL…LESMGHKVQD (227 aa)) folds into the NB-ARC domain. 185–192 (GMPGLGKT) is an ATP binding site. LRR repeat units lie at residues 225–248 (LDIA…NLRS), 305–327 (LHAL…IFNF), 388–411 (DGCA…CFLY), 449–472 (LAED…TYNG), 510–536 (VARL…KLEK), 585–608 (MTCL…IVKL), 609–631 (TRLE…VWES), 652–680 (ISSF…FFEP), 689–710 (LRKL…IFSP), 712–735 (LKAL…LSSY), 736–758 (PHIA…SFPP), 784–807 (LRKL…EANG), and 810–835 (FPQL…DVSM).

This sequence belongs to the disease resistance NB-LRR family. As to quaternary structure, (Microbial infection) Interacts with tobamoviruses mouvement protein at the plasma membrane; this interaction triggers defense responses leading to programmed cell death. In terms of assembly, binds to HSP90 proteins; this interaction seems required for defense responses toward tobamoviruses.

It localises to the cell membrane. Inhibitor of viral mouvements which confers resistance to some tobamoviruses including tomato mosaic virus (ToMV) (e.g. isolate L and W3) and tobacco mosaic virus (TMV), but not to resistance-breaking isolates (e.g. Ltbl) ToMV and tomato brown rugose fruit virus (ToBRFV). Elicits a hypersensitive reaction in response to avirulent (Avr) movement proteins from resistance inducing tobamoviruses (e.g. ToMV and TMV) strains, thus leading to programmed cell death. The polypeptide is ToMV resistant protein Tm-2 netted virescent (Solanum lycopersicum (Tomato)).